We begin with the raw amino-acid sequence, 59 residues long: UPF0434 protein HDEF_0234 (59 aa).

It belongs to the UPF0434 family.

The protein is UPF0434 protein HDEF_0234 of Hamiltonella defensa subsp. Acyrthosiphon pisum (strain 5AT).